Here is an 861-residue protein sequence, read N- to C-terminus: MTTSATSGTGPTANSMRRALKRARDGVALDVTEAAVLLQARGEDLDDLTASAARVRDAGLEAAGRAGVITYSKSVFIPLTRLCRDKCHYCTFVTVPGKLRRAGHGMFMSPDEVLDIARKGAALGCKEALITLGDKPEDRWPEAREWLDAHGYDDTIAYVRAISIRILEETGLLPHLNPGVMSWTDFQRLKPVAPSMGMMLETTATRLWSEPGGPHHGSPDKEPAVRLRVLEDAGRSSVPFTSGILIGIGETYEERAESLFALRKISRAYHGIQELIIQNFRAKPDTAMRGMPDAELDELIATVAVARHIMGPRACLQAPPNLVDSEYGRLIGAGIDDWGGVSPLTIDHVNPERPWPQIDLLREQSAQAGFELRERLCVYPEFVQRGEPWLDPRLLPHVRALADPASGLAHADATVEGHPWQEPEEAFVAQGRTDLHHSIDTEGRTGDRRDDFDVVYGDWEALREAAAPGMVPERIDTDVRQALATAANDPTRLTDAEALALLHADGPALDALTRIADDVRKAAVGDDVTYIVTRNINFTNVCYTGCRFCAFAQRRTDADAYTLSLEQVADRAQQAWDVGAVEVCMQGGIHPDLPGTAYFDIAKAVKERVPGMHVHAFSPMEVVNGATRTGLSIREWLTAAKEAGLDSIPGTAAEILDDEVRWVLTKGKLPTATWIEVITTAHELGIRSSSTMMYGHVDQPRHWLGHFRTLARIQQQTGGFTEFVTLPFIHTNAPVYLAGIARPGPTTRDNRAVMAMARLLLHPHIPNIQTSWVKLGTEGAAEMLRSGANDLGGTLMEETISRMAGSSYGSYKSVKDLIAVAEAAGRPAKPRTTLYGEVPQERQRAAAASDGHLPELLPVLD.

Radical SAM core domains lie at 69 to 319 (ITYS…LQAP) and 528 to 763 (VTYI…LLHP). The cofG-like stretch occupies residues 70–401 (TYSKSVFIPL…PRLLPHVRAL (332 aa)). Cys-83, Cys-87, Cys-90, Cys-542, Cys-546, and Cys-549 together coordinate [4Fe-4S] cluster. The cofH-like stretch occupies residues 505-838 (DGPALDALTR…KPRTTLYGEV (334 aa)).

It in the N-terminal section; belongs to the radical SAM superfamily. CofG family. In the C-terminal section; belongs to the radical SAM superfamily. CofH family. Requires [4Fe-4S] cluster as cofactor.

It carries out the reaction 5-amino-6-(D-ribitylamino)uracil + L-tyrosine + S-adenosyl-L-methionine = 5-amino-5-(4-hydroxybenzyl)-6-(D-ribitylimino)-5,6-dihydrouracil + 2-iminoacetate + 5'-deoxyadenosine + L-methionine + H(+). The enzyme catalyses 5-amino-5-(4-hydroxybenzyl)-6-(D-ribitylimino)-5,6-dihydrouracil + S-adenosyl-L-methionine = 7,8-didemethyl-8-hydroxy-5-deazariboflavin + 5'-deoxyadenosine + L-methionine + NH4(+) + H(+). It participates in cofactor biosynthesis; coenzyme F0 biosynthesis. Functionally, catalyzes the radical-mediated synthesis of 7,8-didemethyl-8-hydroxy-5-deazariboflavin (FO) from 5-amino-6-(D-ribitylamino)uracil and L-tyrosine. The sequence is that of FO synthase (fbiC) from Streptomyces avermitilis (strain ATCC 31267 / DSM 46492 / JCM 5070 / NBRC 14893 / NCIMB 12804 / NRRL 8165 / MA-4680).